Consider the following 405-residue polypeptide: Argininosuccinate synthase (405 aa).

Residue 11-19 (AYSGGLDTS) coordinates ATP. Tyr-90 serves as a coordination point for L-citrulline. An ATP-binding site is contributed by Gly-119. Thr-121, Asn-125, and Asp-126 together coordinate L-aspartate. Asn-125 contributes to the L-citrulline binding site. 5 residues coordinate L-citrulline: Arg-129, Ser-178, Ser-187, Glu-263, and Tyr-275.

This sequence belongs to the argininosuccinate synthase family. Type 1 subfamily. In terms of assembly, homotetramer.

The protein localises to the cytoplasm. The enzyme catalyses L-citrulline + L-aspartate + ATP = 2-(N(omega)-L-arginino)succinate + AMP + diphosphate + H(+). It participates in amino-acid biosynthesis; L-arginine biosynthesis; L-arginine from L-ornithine and carbamoyl phosphate: step 2/3. In Legionella pneumophila (strain Paris), this protein is Argininosuccinate synthase.